Here is a 472-residue protein sequence, read N- to C-terminus: Glutamate-1-semialdehyde 2,1-aminomutase 2, chloroplastic (472 aa).

The N-terminal 36 residues, 1-36, are a transit peptide targeting the chloroplast; it reads MAATLTGSGIALGFSCSAKFSKRASSSSNRRCIKMS. Lysine 312 is subject to N6-(pyridoxal phosphate)lysine.

Belongs to the class-III pyridoxal-phosphate-dependent aminotransferase family. HemL subfamily. Homodimer. It depends on pyridoxal 5'-phosphate as a cofactor. In terms of tissue distribution, expressed in leaf primordia and shoot apical meristems (SAM).

It localises to the plastid. The protein resides in the chloroplast. It carries out the reaction (S)-4-amino-5-oxopentanoate = 5-aminolevulinate. It participates in porphyrin-containing compound metabolism; protoporphyrin-IX biosynthesis; 5-aminolevulinate from L-glutamyl-tRNA(Glu): step 2/2. Its pathway is porphyrin-containing compound metabolism; chlorophyll biosynthesis. Transaminase converting glutamate 1-semialdehyde (GSA) to 5-aminolevulinate (ALA). Involved in the biosynthesis of tetrapyrroles. The polypeptide is Glutamate-1-semialdehyde 2,1-aminomutase 2, chloroplastic (Arabidopsis thaliana (Mouse-ear cress)).